The chain runs to 311 residues: Probable manganese-dependent inorganic pyrophosphatase (311 aa).

The Mn(2+) site is built by H9, D13, D15, D77, H99, and D151.

The protein belongs to the PPase class C family. Mn(2+) serves as cofactor.

It is found in the cytoplasm. The catalysed reaction is diphosphate + H2O = 2 phosphate + H(+). In Streptococcus pneumoniae (strain JJA), this protein is Probable manganese-dependent inorganic pyrophosphatase.